Consider the following 303-residue polypeptide: MATSRYEPVAEIGVGAYGTVYKARDPHSGHFVALKSVRVPNGGGAGGGLPISTVREVALLRRLEAFEHPNVVRLMDVCATARTDRETKVTLVFEHVDQDLRTYLDKAPPPGLPVETIKDLMRQFLRGLDFLHANCIVHRDLKPENILVTSGGTVKLADFGLARIYSYQMALTPVVVTLWYRAPEVLLQSTYATPVDMWSVGCIFAEMFRRKPLFCGNSEADQLGKIFDLIGLPPEDDWPRDVSLPRGAFSPRGPRPVQSVVPEMEESGAQLLLEMLTFNPHKRISAFRALQHSYLHKAEGNPE.

Alanine 2 carries the post-translational modification N-acetylalanine. One can recognise a Protein kinase domain in the interval 6-295 (YEPVAEIGVG…AFRALQHSYL (290 aa)). Residues 12 to 20 (IGVGAYGTV) and lysine 35 each bind ATP. Residues 50 to 56 (PISTVRE) form a required for binding D-type cyclins region. Aspartate 140 (proton acceptor) is an active-site residue. Threonine 172 is subject to Phosphothreonine; by CAK.

This sequence belongs to the protein kinase superfamily. CMGC Ser/Thr protein kinase family. CDC2/CDKX subfamily. In terms of assembly, component of the D-CDK4 complex, composed of CDK4 and some D-type G1 cyclin (CCND1, CCND2 or CCND3). Interacts directly in the complex with CCND1, CCND2 or CCND3. Interacts with SEI1 and ZNF655. Forms a ternary complex, cyclin D-CDK4-CDKN1B, involved in modulating CDK4 enzymatic activity. Interacts directly with CDKN1B (phosphorylated on 'Tyr-88' and 'Tyr-89'); the interaction allows assembly of the cyclin D-CDK4 complex, Thr-172 phosphorylation, nuclear translocation and enhances the cyclin D-CDK4 complex activity. CDK4 activity is either inhibited or enhanced depending on stoichiometry of complex. The non-tyrosine-phosphorylated form of CDKN1B prevents T-loop phosphorylation of CDK4 producing inactive CDK4. Interacts (unphosphorylated form) with CDK2. Also forms ternary complexes with CDKN1A or CDKN2A. Interacts directly with CDKN1A (via its N-terminal); the interaction promotes the assembly of the cyclin D-CDK4 complex, its nuclear translocation and promotes the cyclin D-dependent enzyme activity of CDK4. Interacts with CCND1; the interaction is prevented with the binding of CCND1 to INSM1 during cell cycle progression. Probably forms a complex composed of chaperones HSP90 and HSP70, co-chaperones CDC37, PPP5C, TSC1 and client protein TSC2, CDK4, AKT, RAF1 and NR3C1; this complex does not contain co-chaperones STIP1/HOP and PTGES3/p23. Interacts with CEBPA (when phosphorylated). Interacts with FNIP1 and FNIP2. Post-translationally, phosphorylation at Thr-172 is required for enzymatic activity. Phosphorylated, in vitro, at this site by CCNH-CDK7, but, in vivo, appears to be phosphorylated by a proline-directed kinase. In the cyclin D-CDK4-CDKN1B complex, this phosphorylation and consequent CDK4 enzyme activity, is dependent on the tyrosine phosphorylation state of CDKN1B. Thus, in proliferating cells, CDK4 within the complex is phosphorylated on Thr-172 in the T-loop. In resting cells, phosphorylation on Thr-172 is prevented by the non-tyrosine-phosphorylated form of CDKN1B.

The protein localises to the cytoplasm. The protein resides in the nucleus. It is found in the nucleus membrane. It catalyses the reaction L-seryl-[protein] + ATP = O-phospho-L-seryl-[protein] + ADP + H(+). The catalysed reaction is L-threonyl-[protein] + ATP = O-phospho-L-threonyl-[protein] + ADP + H(+). Both phosphorylation at Thr-172 and binding of a D-type cyclin are necessary for enzymatic activity. Full activation of the cyclin-D-CDK4 complex appears to require other factors such as recruitment of the substrate via a substrate recruitment motif, and/or formation of the CDKN1B ternary complex. Inhibited by INK4 family members. In resting cells, the non-tyrosine-phosphorylated form of CDKN1B prevents phosphorylation at Thr-172 and inactivation, while, in proliferating cells, tyrosine phosphorylation of CDKN1B allows phosphorylation of Thr-172 of CDK4 and subsequent activation. In terms of biological role, ser/Thr-kinase component of cyclin D-CDK4 (DC) complexes that phosphorylate and inhibit members of the retinoblastoma (RB) protein family including RB1 and regulate the cell-cycle during G(1)/S transition. Phosphorylation of RB1 allows dissociation of the transcription factor E2F from the RB/E2F complexes and the subsequent transcription of E2F target genes which are responsible for the progression through the G(1) phase. Hypophosphorylates RB1 in early G(1) phase. Cyclin D-CDK4 complexes are major integrators of various mitogenenic and antimitogenic signals. Also phosphorylates SMAD3 in a cell-cycle-dependent manner and represses its transcriptional activity. Component of the ternary complex, cyclin D/CDK4/CDKN1B, required for nuclear translocation and activity of the cyclin D-CDK4 complex. The chain is Cyclin-dependent kinase 4 (CDK4) from Sus scrofa (Pig).